The sequence spans 204 residues: 8-oxoguanine DNA glycosylase/AP lyase (204 aa).

Active-site residues include K129 and D147.

The protein belongs to the type-2 OGG1 family.

It catalyses the reaction 2'-deoxyribonucleotide-(2'-deoxyribose 5'-phosphate)-2'-deoxyribonucleotide-DNA = a 3'-end 2'-deoxyribonucleotide-(2,3-dehydro-2,3-deoxyribose 5'-phosphate)-DNA + a 5'-end 5'-phospho-2'-deoxyribonucleoside-DNA + H(+). Catalyzes the excision of an oxidatively damaged form of guanine (7,8-dihydro-8-oxoguanine = 8-oxoG) from DNA. Also cleaves the DNA backbone at apurinic/apyrimidinic sites (AP sites). Prefers oligomers containing 8-oxoG:C, 8-oxoG:T and 8-oxoG:G base pairs, and is less effective on oligomers containing 8-oxoG:A mispairs. The sequence is that of 8-oxoguanine DNA glycosylase/AP lyase from Thermoplasma volcanium (strain ATCC 51530 / DSM 4299 / JCM 9571 / NBRC 15438 / GSS1).